Here is a 467-residue protein sequence, read N- to C-terminus: UDP-N-acetylmuramate--L-alanine ligase (467 aa).

114–120 (GTHGKTT) provides a ligand contact to ATP.

This sequence belongs to the MurCDEF family.

It is found in the cytoplasm. The enzyme catalyses UDP-N-acetyl-alpha-D-muramate + L-alanine + ATP = UDP-N-acetyl-alpha-D-muramoyl-L-alanine + ADP + phosphate + H(+). The protein operates within cell wall biogenesis; peptidoglycan biosynthesis. In terms of biological role, cell wall formation. This is UDP-N-acetylmuramate--L-alanine ligase from Nitrobacter hamburgensis (strain DSM 10229 / NCIMB 13809 / X14).